The following is a 421-amino-acid chain: UPF0415 protein C7orf25 homolog (421 aa).

It belongs to the UPF0415 family.

This chain is UPF0415 protein C7orf25 homolog, found in Rattus norvegicus (Rat).